A 133-amino-acid polypeptide reads, in one-letter code: Transcriptional regulator MraZ (133 aa).

2 consecutive SpoVT-AbrB domains span residues 5-47 (TYEH…SKDD) and 76-119 (TVEI…SKNK).

This sequence belongs to the MraZ family. As to quaternary structure, forms oligomers.

It localises to the cytoplasm. The protein resides in the nucleoid. This chain is Transcriptional regulator MraZ, found in Mycoplasma mycoides subsp. mycoides SC (strain CCUG 32753 / NCTC 10114 / PG1).